We begin with the raw amino-acid sequence, 506 residues long: Glutamate--tRNA ligase (506 aa).

A 'HIGH' region motif is present at residues 29–39 (PSPTGTPHVGL). Residues 273–277 (KLSKR) carry the 'KMSKS' region motif. Lysine 276 is an ATP binding site.

This sequence belongs to the class-I aminoacyl-tRNA synthetase family. Glutamate--tRNA ligase type 1 subfamily. In terms of assembly, monomer.

Its subcellular location is the cytoplasm. The enzyme catalyses tRNA(Glu) + L-glutamate + ATP = L-glutamyl-tRNA(Glu) + AMP + diphosphate. Its function is as follows. Catalyzes the attachment of glutamate to tRNA(Glu) in a two-step reaction: glutamate is first activated by ATP to form Glu-AMP and then transferred to the acceptor end of tRNA(Glu). This Paenarthrobacter aurescens (strain TC1) protein is Glutamate--tRNA ligase.